Reading from the N-terminus, the 89-residue chain is UPF0145 protein MJ1170 (89 aa).

It belongs to the UPF0145 family. Highly divergent.

The polypeptide is UPF0145 protein MJ1170 (Methanocaldococcus jannaschii (strain ATCC 43067 / DSM 2661 / JAL-1 / JCM 10045 / NBRC 100440) (Methanococcus jannaschii)).